The chain runs to 352 residues: Maleylacetate reductase (352 aa).

The protein belongs to the iron-containing alcohol dehydrogenase family.

The enzyme catalyses 3-oxoadipate + NAD(+) = maleylacetate + NADH + H(+). It carries out the reaction 3-oxoadipate + NADP(+) = maleylacetate + NADPH + H(+). Its pathway is xenobiotic degradation; (2,4,5-trichlorophenoxy)acetate degradation. In Burkholderia cepacia (Pseudomonas cepacia), this protein is Maleylacetate reductase (tftE).